Consider the following 213-residue polypeptide: Probable nicotinate-nucleotide adenylyltransferase (213 aa).

It belongs to the NadD family.

It carries out the reaction nicotinate beta-D-ribonucleotide + ATP + H(+) = deamido-NAD(+) + diphosphate. It functions in the pathway cofactor biosynthesis; NAD(+) biosynthesis; deamido-NAD(+) from nicotinate D-ribonucleotide: step 1/1. Its function is as follows. Catalyzes the reversible adenylation of nicotinate mononucleotide (NaMN) to nicotinic acid adenine dinucleotide (NaAD). The chain is Probable nicotinate-nucleotide adenylyltransferase from Pectobacterium atrosepticum (strain SCRI 1043 / ATCC BAA-672) (Erwinia carotovora subsp. atroseptica).